The sequence spans 459 residues: Phosphomethylpyrimidine synthase (459 aa).

Substrate-binding positions include Asn80, Met109, Tyr139, His175, 195–197 (SRG), 236–239 (DSLR), and Glu275. Residue His279 participates in Zn(2+) binding. Tyr302 lines the substrate pocket. Residue His343 participates in Zn(2+) binding. Positions 423, 426, and 431 each coordinate [4Fe-4S] cluster.

The protein belongs to the ThiC family. Requires [4Fe-4S] cluster as cofactor.

The enzyme catalyses 5-amino-1-(5-phospho-beta-D-ribosyl)imidazole + S-adenosyl-L-methionine = 4-amino-2-methyl-5-(phosphooxymethyl)pyrimidine + CO + 5'-deoxyadenosine + formate + L-methionine + 3 H(+). Its pathway is cofactor biosynthesis; thiamine diphosphate biosynthesis. In terms of biological role, catalyzes the synthesis of the hydroxymethylpyrimidine phosphate (HMP-P) moiety of thiamine from aminoimidazole ribotide (AIR) in a radical S-adenosyl-L-methionine (SAM)-dependent reaction. The sequence is that of Phosphomethylpyrimidine synthase from Synechocystis sp. (strain ATCC 27184 / PCC 6803 / Kazusa).